The primary structure comprises 148 residues: Large ribosomal subunit protein uL15 (148 aa).

Residues 1–46 (MITIEDLKPTPGSNKKYKRLGRGQGSGKGKTAGKGHKGQKSRGTGK) form a disordered region. Positions 31–45 (TAGKGHKGQKSRGTG) are enriched in basic residues.

This sequence belongs to the universal ribosomal protein uL15 family. As to quaternary structure, part of the 50S ribosomal subunit.

Its function is as follows. Binds to the 23S rRNA. This is Large ribosomal subunit protein uL15 from Fervidobacterium nodosum (strain ATCC 35602 / DSM 5306 / Rt17-B1).